Consider the following 361-residue polypeptide: Phosphoserine aminotransferase (361 aa).

Residues Ser-9 and Arg-42 each coordinate L-glutamate. Residues Ala-76–Arg-77, Trp-102, Thr-153, Asp-173, and Gln-196 each bind pyridoxal 5'-phosphate. Position 197 is an N6-(pyridoxal phosphate)lysine (Lys-197). Asn-238–Thr-239 contacts pyridoxal 5'-phosphate.

It belongs to the class-V pyridoxal-phosphate-dependent aminotransferase family. SerC subfamily. As to quaternary structure, homodimer. It depends on pyridoxal 5'-phosphate as a cofactor.

The protein localises to the cytoplasm. The catalysed reaction is O-phospho-L-serine + 2-oxoglutarate = 3-phosphooxypyruvate + L-glutamate. It catalyses the reaction 4-(phosphooxy)-L-threonine + 2-oxoglutarate = (R)-3-hydroxy-2-oxo-4-phosphooxybutanoate + L-glutamate. The protein operates within amino-acid biosynthesis; L-serine biosynthesis; L-serine from 3-phospho-D-glycerate: step 2/3. Its pathway is cofactor biosynthesis; pyridoxine 5'-phosphate biosynthesis; pyridoxine 5'-phosphate from D-erythrose 4-phosphate: step 3/5. Catalyzes the reversible conversion of 3-phosphohydroxypyruvate to phosphoserine and of 3-hydroxy-2-oxo-4-phosphonooxybutanoate to phosphohydroxythreonine. In Serratia proteamaculans (strain 568), this protein is Phosphoserine aminotransferase.